The chain runs to 190 residues: MLLSDRDIRAEITAGRLGVDPFDDSLVQPSSVDVRLDNLFRVFNNTRYTHIDPAQRQDDLTSLVEPKEGEPFVLHPGEFVLGATLERCTLPDDLAGRLEGKSSLGRLGLLTHSTAGFIDPGFSGHITLELSNVANLPITLWPGMKIGQLCLLRLTSPAEHPYGSSSVGSKYQGQRGPTPSRSYQNFVKND.

Residues 101-106 (KSSLGR), aspartate 119, 127-129 (TLE), glutamine 148, tyrosine 162, and glutamine 174 each bind dCTP. The Proton donor/acceptor role is filled by glutamate 129. Residues 161–190 (PYGSSSVGSKYQGQRGPTPSRSYQNFVKND) form a disordered region. Over residues 163 to 190 (GSSSVGSKYQGQRGPTPSRSYQNFVKND) the composition is skewed to polar residues.

The protein belongs to the dCTP deaminase family. As to quaternary structure, homotrimer.

It carries out the reaction dCTP + 2 H2O = dUMP + NH4(+) + diphosphate. Its pathway is pyrimidine metabolism; dUMP biosynthesis; dUMP from dCTP: step 1/1. Its function is as follows. Bifunctional enzyme that catalyzes both the deamination of dCTP to dUTP and the hydrolysis of dUTP to dUMP without releasing the toxic dUTP intermediate. The polypeptide is dCTP deaminase, dUMP-forming (Mycolicibacterium vanbaalenii (strain DSM 7251 / JCM 13017 / BCRC 16820 / KCTC 9966 / NRRL B-24157 / PYR-1) (Mycobacterium vanbaalenii)).